Reading from the N-terminus, the 49-residue chain is Sperm protamine P1 (49 aa).

It belongs to the protamine P1 family. Testis.

The protein localises to the nucleus. It is found in the chromosome. Functionally, protamines substitute for histones in the chromatin of sperm during the haploid phase of spermatogenesis. They compact sperm DNA into a highly condensed, stable and inactive complex. This Pteropus hypomelanus (Island flying fox) protein is Sperm protamine P1 (PRM1).